A 345-amino-acid chain; its full sequence is MGSSGDDGYRLLNEYTNGFMVSQVLFAACELGVFDLLAEAPGPLDVAAVAAGVEASSHGTELLLDTCVSLKLLKVETRAGKAFYQNTELSSAYLTRVSPTSQCNLLKYMGRTSYGCWGHLADAVREGKNQYLQTFGVPAEDLFKAIYRSEGERLQFMQALQEVWSVNGRSVLTAFDLSGFPLMCDLGGGPGALAKECLSLYPGCKVTVFDVPEVVRTAKQHFSFPEEEEIHLQEGDFFKDPLPEADLYILARILHDWADGKCSHLLERVYHTCKPGGGILVIESLLDEDRRGPLLTQLYSLNMLVQTEGQERTPTHYHMLLSSAGFRDFQFKKTGAIYDAILVRK.

S-adenosyl-L-methionine contacts are provided by residues Tyr147, Trp164, Asp210, 235 to 237, and Arg252; that span reads GDF. The Proton donor/acceptor role is filled by His255. Residues Asp256, Asn302, and Gln306 each contribute to the substrate site.

Belongs to the class I-like SAM-binding methyltransferase superfamily. Cation-independent O-methyltransferase family. In terms of assembly, homodimer. In terms of tissue distribution, highly expressed in pineal gland. In the retina, 10- to 100-fold lower expression compared to pineal gland, if any.

It carries out the reaction N-acetylserotonin + S-adenosyl-L-methionine = melatonin + S-adenosyl-L-homocysteine + H(+). Its pathway is aromatic compound metabolism; melatonin biosynthesis; melatonin from serotonin: step 1/2. Its function is as follows. Catalyzes the transfer of a methyl group onto N-acetylserotonin, producing melatonin (N-acetyl-5-methoxytryptamine). The chain is Acetylserotonin O-methyltransferase (ASMT) from Macaca mulatta (Rhesus macaque).